The sequence spans 459 residues: Exodeoxyribonuclease 7 large subunit (459 aa).

Belongs to the XseA family. In terms of assembly, heterooligomer composed of large and small subunits.

Its subcellular location is the cytoplasm. The catalysed reaction is Exonucleolytic cleavage in either 5'- to 3'- or 3'- to 5'-direction to yield nucleoside 5'-phosphates.. Bidirectionally degrades single-stranded DNA into large acid-insoluble oligonucleotides, which are then degraded further into small acid-soluble oligonucleotides. This chain is Exodeoxyribonuclease 7 large subunit, found in Pseudomonas fluorescens (strain SBW25).